The sequence spans 187 residues: Core-binding factor subunit beta (187 aa).

Ser10 bears the Phosphoserine; by CK2 mark. The tract at residues 139 to 187 (AQQAFEEARRRTREFEDRDRSHREEMEARRQQDPSPGSNLGGGDDLKLR) is disordered. The span at 144-170 (EEARRRTREFEDRDRSHREEMEARRQQ) shows a compositional bias: basic and acidic residues. Ser159 carries the phosphoserine; by PKC modification.

It belongs to the CBF-beta family. Heterodimer with RUNX1, RUNX2 and RUNX3. Interacts with COPRS. Found in a complex with PRMT5 and RUNX1. As to expression, expressed in all tissues tested. Highest level in thymus, but also abundantly expressed in muscle, lung and brain.

It is found in the nucleus. Its function is as follows. Forms the heterodimeric complex core-binding factor (CBF) with RUNX family proteins (RUNX1, RUNX2, and RUNX3). RUNX members modulate the transcription of their target genes through recognizing the core consensus binding sequence 5'-TGTGGT-3', or very rarely, 5'-TGCGGT-3', within their regulatory regions via their runt domain, while CBFB is a non-DNA-binding regulatory subunit that allosterically enhances the sequence-specific DNA-binding capacity of RUNX. The heterodimers bind to the core site of a number of enhancers and promoters, including murine leukemia virus, polyomavirus enhancer, T-cell receptor enhancers, LCK, IL3 and GM-CSF promoters. CBF complexes repress ZBTB7B transcription factor during cytotoxic (CD8+) T cell development. They bind to RUNX-binding sequence within the ZBTB7B locus acting as transcriptional silencer and allowing for cytotoxic T cell differentiation. This is Core-binding factor subunit beta (Cbfb) from Mus musculus (Mouse).